Reading from the N-terminus, the 515-residue chain is Bifunctional dihydrofolate reductase-thymidylate synthase (515 aa).

Residues 26–228 (AFSIVVAADQ…LSYEIMKYVP (203 aa)) enclose the DHFR domain. Val30 is a binding site for substrate. Residues Ala32, 38–44 (GIGDGET), 81–83 (RKT), and 101–104 (LSCR) contribute to the NADP(+) site. Residues Ile154, Tyr160, and Thr178 each contribute to the substrate site. 155 to 162 (GGARVYTE) lines the NADP(+) pocket. Residues 233-515 (ERQYLELIDR…YPPIKMEMAV (283 aa)) form a thymidylate synthase region. Arg253 serves as a coordination point for dUMP. Cys395 is an active-site residue. Residues His396, 416 to 420 (QRCCD), Asn428, and 458 to 460 (HVY) contribute to the dUMP site.

The protein in the N-terminal section; belongs to the dihydrofolate reductase family. It in the C-terminal section; belongs to the thymidylate synthase family.

The enzyme catalyses (6S)-5,6,7,8-tetrahydrofolate + NADP(+) = 7,8-dihydrofolate + NADPH + H(+). The catalysed reaction is dUMP + (6R)-5,10-methylene-5,6,7,8-tetrahydrofolate = 7,8-dihydrofolate + dTMP. Its pathway is cofactor biosynthesis; tetrahydrofolate biosynthesis; 5,6,7,8-tetrahydrofolate from 7,8-dihydrofolate: step 1/1. Functionally, bifunctional enzyme. Involved in de novo dTMP biosynthesis. Key enzyme in folate metabolism. Catalyzes an essential reaction for de novo glycine and purine synthesis, DNA precursor synthesis, and for the conversion of dUMP to dTMP. The chain is Bifunctional dihydrofolate reductase-thymidylate synthase from Crithidia fasciculata.